Reading from the N-terminus, the 90-residue chain is DNA-binding protein HRm (90 aa).

It belongs to the bacterial histone-like protein family.

Functionally, histone-like DNA-binding protein which is capable of wrapping DNA to stabilize it, and thus to prevent its denaturation under extreme environmental conditions. The sequence is that of DNA-binding protein HRm (hupB) from Rhizobium meliloti (strain 1021) (Ensifer meliloti).